We begin with the raw amino-acid sequence, 601 residues long: MICPRKKRPIKDEDFSAIVVPSMRGHGYLDYTVESHPSKALQNMDELRHHEMLCDLVLHVTYKDKIVDFKVHKLVLAASSPYFKAMFTSNFKECHASEVTLRDVCPQVISRLIDFAYTSRITVGETCVLHVLLTAMRYQMEEVAKACCDFLMKNLEPSNVIGISRFAEEIGCTDLHLRTREYINTHFNEVTKEEEFFSLSHCQLLELISQDSLKVLCESEVYKACIDWVRWDAESRAQYFHALLNAVHIYALPPTFLKRQLQSCPILSKANSCKDFLSKIFHEMALRKPLPPTPHRGTQLIYIAGGYKQHSLDTLEAFDPHKNVWLKLGSMMSPCSGLGACVLFGLLYTVGGRNLSLQNNTESGSLSCYNPMTNQWTQLAPLNTPRNRVGVGVIDGSIYAVGGSHASTHHNSVERYDPETNRWTFVAPMSVARLGAGVAACGGCLYVVGGFDGDNRWNTVERYQPDTNTWQHVAPMNTVRSGLGVVCMDNYLYAVGGYDGQTQLKTMERYNITRDVWEPMASMNHCRSAHGVSVYQCKIFVLGGFNQGGFLSSVECYCPASNVWTLVTDMPVGRSGMGVAVTMEPCPGILPEEEEEVDEEM.

The region spanning 44 to 117 (MDELRHHEML…VISRLIDFAY (74 aa)) is the BTB domain. The BACK domain occupies 153–253 (KNLEPSNVIG…LNAVHIYALP (101 aa)). Kelch repeat units lie at residues 292–337 (PTPH…PCSG), 338–388 (LGAC…PRNR), 389–435 (VGVG…ARLG), 436–482 (AGVA…VRSG), 484–529 (GVVC…CRSA), and 530–576 (HGVS…GRSG).

Belongs to the KEAP1 family. As to quaternary structure, homodimer and heterodimer; heterodimerizes with keap1b. Component of the BCR(KEAP1) E3 ubiquitin ligase complex, at least composed of 2 molecules of cul3, 2 molecules of keap1 (keap1a and/or keap1b), and rbx1. Interacts with nfe2l2/nrf2; the interaction is direct. Non-enzymatic covalent modifications of reactive cysteines by electrophile metabolites inactivate the BCR(KEAP1) complex. As to expression, widely expressed.

It localises to the cytoplasm. The protein resides in the nucleus. It functions in the pathway protein modification; protein ubiquitination. Its activity is regulated as follows. Ubiquitin ligase activity of the BCR(KEAP1) complex is inhibited by oxidative stress and electrophile metabolites such as sulforaphane. Electrophile metabolites react with reactive cysteine residues in keap1 and trigger non-enzymatic covalent modifications of these cysteine residues, leading to inactivate the ubiquitin ligase activity of the BCR(KEAP1) complex. Functionally, substrate-specific adapter of a BCR (BTB-CUL3-RBX1) E3 ubiquitin ligase complex that regulates the response to oxidative stress by targeting nfe2l2/nrf2 for ubiquitination. Keap1 acts as a key sensor of oxidative and electrophilic stress: in normal conditions, the BCR(KEAP1) complex mediates ubiquitination and degradation of nfe2l2/nrf2, a transcription factor regulating expression of many cytoprotective genes. In response to oxidative stress, different electrophile metabolites trigger non-enzymatic covalent modifications of highly reactive cysteine residues in KEAP1, leading to inactivate the ubiquitin ligase activity of the BCR(KEAP1) complex, promoting nfe2l2/nrf2 nuclear accumulation and expression of phase II detoxifying enzymes. This Danio rerio (Zebrafish) protein is Kelch-like ECH-associated protein 1A.